Here is a 286-residue protein sequence, read N- to C-terminus: Polyamine aminopropyltransferase (286 aa).

One can recognise a PABS domain in the interval Asp2 to Lys237. Gln31 contributes to the S-methyl-5'-thioadenosine binding site. Residue Asp86 coordinates spermidine. S-methyl-5'-thioadenosine contacts are provided by residues Glu106 and Asn137–Gly138. The active-site Proton acceptor is the Asp155.

This sequence belongs to the spermidine/spermine synthase family. Homodimer or homotetramer.

The protein localises to the cytoplasm. The enzyme catalyses S-adenosyl 3-(methylsulfanyl)propylamine + putrescine = S-methyl-5'-thioadenosine + spermidine + H(+). It participates in amine and polyamine biosynthesis; spermidine biosynthesis; spermidine from putrescine: step 1/1. In terms of biological role, catalyzes the irreversible transfer of a propylamine group from the amino donor S-adenosylmethioninamine (decarboxy-AdoMet) to putrescine (1,4-diaminobutane) to yield spermidine. In Streptococcus pneumoniae serotype 4 (strain ATCC BAA-334 / TIGR4), this protein is Polyamine aminopropyltransferase.